Consider the following 407-residue polypeptide: Putative mannan endo-1,4-beta-mannosidase 9 (407 aa).

An N-terminal signal peptide occupies residues 1–31; the sequence is MGSKRRVILLPTLGVVVLAIAAAVLLHAGEA. Positions 95 and 208 each coordinate substrate. Glu209 (proton donor) is an active-site residue. Tyr284 contributes to the substrate binding site. The Nucleophile role is filled by Glu324. Trp366 serves as a coordination point for substrate.

This sequence belongs to the glycosyl hydrolase 5 (cellulase A) family. Expression not detected.

Its subcellular location is the secreted. It catalyses the reaction Random hydrolysis of (1-&gt;4)-beta-D-mannosidic linkages in mannans, galactomannans and glucomannans.. This is Putative mannan endo-1,4-beta-mannosidase 9 (MAN9) from Oryza sativa subsp. japonica (Rice).